The chain runs to 1013 residues: PHD finger protein 20-like protein 1 (1013 aa).

Positions 11 to 71 (ITFEIGARLE…SNRLRPLERP (61 aa)) constitute a Tudor 1 domain. Glycyl lysine isopeptide (Lys-Gly) (interchain with G-Cter in SUMO2) cross-links involve residues K75 and K79. The Tudor 2 domain maps to 85–141 (FDFKAGEEVLARWTDCRYYPAKIEAINKEGTFTVQFYDGVIRCLKRMHIKAMPEDAK). Disordered regions lie at residues 183–206 (AKNK…RDGG), 309–368 (EQAI…TPKS), 389–454 (VINK…QSSV), and 482–511 (VTGS…FANP). Polar residues predominate over residues 315–346 (KPQSQKKNEAVISSSANTQKPALLSSTLSSGK). S368 is subject to Phosphoserine. Basic residues predominate over residues 404–415 (PCKHSERRRRSQ). S432 is subject to Phosphoserine. The span at 443 to 453 (SISSQNQQQSS) shows a compositional bias: low complexity. Positions 496-505 (ECPREEKEET) are enriched in basic and acidic residues. Residue K530 forms a Glycyl lysine isopeptide (Lys-Gly) (interchain with G-Cter in SUMO2) linkage. The segment covering 533 to 565 (KKVKLEEKTSTAFGKRKEKDKEKKEKRDKDHYK) has biased composition (basic and acidic residues). The tract at residues 533–585 (KKVKLEEKTSTAFGKRKEKDKEKKEKRDKDHYKPKQKKKKKKKKKSKQHDYSD) is disordered. Positions 566-579 (PKQKKKKKKKKKSK) are enriched in basic residues. The PHD-type zinc finger occupies 681 to 729 (IVRCICELDEENGFMIQCEECLCWQHSVCMGLLEDSIPEQYICYICRDP). A compositionally biased stretch (basic and acidic residues) spans 824–852 (RKITPQDRANSEGKECVQNHKEPALRMEE). Residues 824-911 (RKITPQDRAN…LLYKNRGVSE (88 aa)) form a disordered region. Polar residues predominate over residues 854-878 (YITSEHSYQKPQSFSQDCQSLTDPG). A compositionally biased stretch (acidic residues) spans 879 to 892 (SSDDDDASSFEEDG). N6-acetyllysine is present on K905.

In terms of assembly, interacts with methylated DNMT1 (DNMT1K142me1). Interacts with SOX2.

Its subcellular location is the nucleus. Functionally, is a negative regulator of proteasomal degradation of a set of methylated proteins, including DNMT1 and SOX2. Involved in the maintainance of embryonic stem cells pluripotency, through the regulation of SOX2 levels. The protein is PHD finger protein 20-like protein 1 (Phf20l1) of Mus musculus (Mouse).